The chain runs to 179 residues: Laminin-binding fimbrial subunit ElfA (179 aa).

The N-terminal stretch at 1-21 is a signal peptide; the sequence is MKKSVLTAFITVVCATSSVMA.

The protein belongs to the fimbrial protein family.

The protein localises to the fimbrium. Part of the elfADCG fimbrial operon, which could be required for adherence to host epithelial cells. ElfA is an accessory colonization factor that contributes to adherence of bacteria to human intestinal epithelial cells and to animal intestinal tissue in vitro. Binds specifically to laminin, but not to fibronectin or collagen type IV. The protein is Laminin-binding fimbrial subunit ElfA (elfA) of Escherichia coli O157:H7.